Reading from the N-terminus, the 41-residue chain is Large ribosomal subunit protein bL36 (41 aa).

The protein belongs to the bacterial ribosomal protein bL36 family.

The sequence is that of Large ribosomal subunit protein bL36 from Nitrobacter winogradskyi (strain ATCC 25391 / DSM 10237 / CIP 104748 / NCIMB 11846 / Nb-255).